Here is a 267-residue protein sequence, read N- to C-terminus: tRNA pseudouridine synthase A (267 aa).

Asp52 acts as the Nucleophile in catalysis. Tyr110 serves as a coordination point for substrate.

This sequence belongs to the tRNA pseudouridine synthase TruA family. In terms of assembly, homodimer.

It carries out the reaction uridine(38/39/40) in tRNA = pseudouridine(38/39/40) in tRNA. Functionally, formation of pseudouridine at positions 38, 39 and 40 in the anticodon stem and loop of transfer RNAs. This chain is tRNA pseudouridine synthase A, found in Paraburkholderia phymatum (strain DSM 17167 / CIP 108236 / LMG 21445 / STM815) (Burkholderia phymatum).